Consider the following 384-residue polypeptide: Lipid-A-disaccharide synthase 1 (384 aa).

It belongs to the LpxB family.

It carries out the reaction a lipid X + a UDP-2-N,3-O-bis[(3R)-3-hydroxyacyl]-alpha-D-glucosamine = a lipid A disaccharide + UDP + H(+). Its pathway is bacterial outer membrane biogenesis; LPS lipid A biosynthesis. Its function is as follows. Condensation of UDP-2,3-diacylglucosamine and 2,3-diacylglucosamine-1-phosphate to form lipid A disaccharide, a precursor of lipid A, a phosphorylated glycolipid that anchors the lipopolysaccharide to the outer membrane of the cell. This chain is Lipid-A-disaccharide synthase 1, found in Legionella pneumophila (strain Paris).